The sequence spans 76 residues: Putative phosphotransferase enzyme IIA component YyzE (76 aa).

The PTS EIIA type-1 domain occupies 1–76 (MVTPTKHAIG…LHQKIFTVVS (76 aa)). His-22 (tele-phosphohistidine intermediate) is an active-site residue.

The protein localises to the cytoplasm. Functionally, the phosphoenolpyruvate-dependent sugar phosphotransferase system (PTS), a major carbohydrate active -transport system, catalyzes the phosphorylation of incoming sugar substrates concomitant with their translocation across the cell membrane. This is Putative phosphotransferase enzyme IIA component YyzE (yyzE) from Bacillus subtilis (strain 168).